We begin with the raw amino-acid sequence, 514 residues long: Probable WRKY transcription factor 4 (514 aa).

Disordered regions lie at residues 1–28 (MSEKEEAPSTSKSTGAPSRPTLSLPPRP), 175–204 (QPQTEYPPPSQVQSFSSGQAQIPTSAPLPA), and 278–394 (YKGQ…TVTE). Composition is skewed to polar residues over residues 185–198 (QVQSFSSGQAQIPT) and 286–299 (PPQNTKRGNKDNTA). The WRKY 1 DNA-binding region spans 223-287 (NVDKPADDGY…YKGQHNHEPP (65 aa)). Positions 300 to 313 (NINGSSINNNRGSS) are enriched in low complexity. Over residues 315–326 (LGASQFQTNSSN) the composition is skewed to polar residues. Residues 359–380 (TDVREKDENEPDPKRRSTEVRI) show a composition bias toward basic and acidic residues. A DNA-binding region (WRKY 2) is located at residues 403–468 (SEVDLLDDGY…YEGKHNHDLP (66 aa)). Zn(2+) contacts are provided by Cys434, Thr436, Cys439, His463, and His465. The disordered stretch occupies residues 464 to 514 (NHDLPAAKSSSHAAAAAQLRPDNRPGGLANLNQQQQQQPVARLRLKEEQTT). Residues 469-480 (AAKSSSHAAAAA) are compositionally biased toward low complexity.

In terms of tissue distribution, in young, mature and senescent leaves.

It localises to the nucleus. In terms of biological role, transcription factor that binds specifically to the W box (5'-(T)TGAC[CT]-3'), a frequently occurring elicitor-responsive cis-acting element. Has a positive role in resistance to necrotrophic pathogens (e.g. Botrytis cinerea), but a negative effect on plant resistance to biotrophic pathogens (e.g. Pseudomonas syringae). This chain is Probable WRKY transcription factor 4 (WRKY4), found in Arabidopsis thaliana (Mouse-ear cress).